The sequence spans 175 residues: Catabolic 3-dehydroquinase (175 aa).

The active-site Proton acceptor is the tyrosine 23. Residues asparagine 74, histidine 80, and aspartate 87 each contribute to the substrate site. Catalysis depends on histidine 100, which acts as the Proton donor. Residues 101–102 and arginine 111 contribute to the substrate site; that span reads IS.

It belongs to the type-II 3-dehydroquinase family. Homododecamer. Adopts a ring-like structure, composed of an arrangement of two hexameric rings stacked on top of one another.

The enzyme catalyses 3-dehydroquinate = 3-dehydroshikimate + H2O. Its pathway is aromatic compound metabolism; 3,4-dihydroxybenzoate biosynthesis; 3,4-dihydroxybenzoate from 3-dehydroquinate: step 1/2. Is involved in the catabolism of quinate. Allows the utilization of quinate as carbon source via the beta-ketoadipate pathway. The chain is Catabolic 3-dehydroquinase from Talaromyces marneffei (strain ATCC 18224 / CBS 334.59 / QM 7333) (Penicillium marneffei).